We begin with the raw amino-acid sequence, 470 residues long: 6-phospho-beta-galactosidase (470 aa).

Residues Q19, H116, N159, E160, and N297 each contribute to the D-galactose 6-phosphate site. The active-site Proton donor is the E160. Residue E375 is the Nucleophile of the active site. D-galactose 6-phosphate is bound by residues S430, W431, K437, and Y439.

The protein belongs to the glycosyl hydrolase 1 family.

It carries out the reaction a 6-phospho-beta-D-galactoside + H2O = D-galactose 6-phosphate + an alcohol. It functions in the pathway carbohydrate metabolism; lactose degradation; D-galactose 6-phosphate and beta-D-glucose from lactose 6-phosphate: step 1/1. In Staphylococcus epidermidis (strain ATCC 35984 / DSM 28319 / BCRC 17069 / CCUG 31568 / BM 3577 / RP62A), this protein is 6-phospho-beta-galactosidase.